Reading from the N-terminus, the 479-residue chain is PTS system glucose-specific EIICB component (479 aa).

A PTS EIIC type-1 domain is found at 1–388 (MFKNAFSNLQ…FNLKTPGREK (388 aa)). The next 9 helical transmembrane spans lie at 15–35 (SLMLPVSVLPIAGILLGIGSA), 51–71 (AGSSVFSNMPLIFAIGIALGF), 80–100 (LAAVVSYGIMTKTLSITIPIF), 112–132 (YLLDTGILGGIIAGSISAYIF), 152–172 (FVPIASGLISIIFGCILSIIW), 252–272 (GGFIFKMYGLPFAALAMWHCA), 280–300 (IGGIMMSGALTAILTGITEPI), 305–325 (ILVAPILYVIHAILAGLAFPI), and 356–376 (LFPIVGLFYGILYYGIFYFMI). A PTS EIIB type-1 domain is found at 399–479 (KETALLVISI…IDNYMSNTNQ (81 aa)). The Phosphocysteine intermediate; for EIIB activity role is filled by Cys-421. The residue at position 421 (Cys-421) is a Phosphocysteine.

Its subcellular location is the cell inner membrane. The catalysed reaction is N(pros)-phospho-L-histidyl-[protein] + D-glucose(out) = D-glucose 6-phosphate(in) + L-histidyl-[protein]. The phosphoenolpyruvate-dependent sugar phosphotransferase system (sugar PTS), a major carbohydrate active transport system, catalyzes the phosphorylation of incoming sugar substrates concomitantly with their translocation across the cell membrane. The enzyme II complex composed of PtsG and Crr is involved in glucose transport. This chain is PTS system glucose-specific EIICB component (ptsG), found in Buchnera aphidicola subsp. Baizongia pistaciae (strain Bp).